A 517-amino-acid polypeptide reads, in one-letter code: MRLPTKEEIQRYWVNEGNKLILVILYTLGNIAAFVYTFVHYYNSPAFEVVGYGVCFARGCAQLLKLNCALILVPVLRNLLSFLRGTFLNNYVPFDKNIVFHKLIAWVICFATFGHVMAHFNNFRLYQDITPQEYKRILGIDYPNLTPIKYAFATLAGWTGHVVCIVMVLMYTSAVESIRRPMFEGFWYTHHLFVVFFGLLVVHGLHSILEPTSFWKWVIGPCALYIVERLIRLLRSKKTTMLIQARIHPSRVIEVRMKTERFKYKPGQYLFLNCPTIAQNEWHPFTITSAPEEDFVSCHINVVGNWTGKLSTLLNPDKKMGIVQENVLKSPDGKPILRIDGPFGAASEEVFKYKQVILVGAGIGVTPFASILKHIKYQMARTYNTTPLIDKVHFYWICRDRNSFEWFSGLIGELEMENHNNFLEIHPYLTGALSAQEIRDVMYGDEEKDLITGFTTPTQFGRPKWDEIFADHALRYAEKDVGVFFCGPKLLSKSLYKASTHYTKTTTCRFHYNKENF.

Topologically, residues 1–19 (MRLPTKEEIQRYWVNEGNK) are cytoplasmic. The helical transmembrane segment at 20–40 (LILVILYTLGNIAAFVYTFVH) threads the bilayer. At 41–62 (YYNSPAFEVVGYGVCFARGCAQ) the chain is on the extracellular side. In terms of domain architecture, Ferric oxidoreductase spans 58–201 (RGCAQLLKLN…LFVVFFGLLV (144 aa)). Residues 63 to 83 (LLKLNCALILVPVLRNLLSFL) traverse the membrane as a helical segment. The Cytoplasmic segment spans residues 84–97 (RGTFLNNYVPFDKN). A helical transmembrane segment spans residues 98 to 118 (IVFHKLIAWVICFATFGHVMA). Residues His-101 and His-115 each coordinate heme. Residues 119–149 (HFNNFRLYQDITPQEYKRILGIDYPNLTPIK) lie on the Extracellular side of the membrane. The chain crosses the membrane as a helical span at residues 150–170 (YAFATLAGWTGHVVCIVMVLM). At 171–184 (YTSAVESIRRPMFE) the chain is on the cytoplasmic side. The helical transmembrane segment at 185–205 (GFWYTHHLFVVFFGLLVVHGL) threads the bilayer. Residues His-190 and His-203 each contribute to the heme site. His-206 is a topological domain (extracellular). Residues 207–227 (SILEPTSFWKWVIGPCALYIV) traverse the membrane as a helical segment. At 228–517 (ERLIRLLRSK…CRFHYNKENF (290 aa)) the chain is on the cytoplasmic side. One can recognise an FAD-binding FR-type domain in the interval 229–349 (RLIRLLRSKK…DGPFGAASEE (121 aa)). 283 to 289 (HPFTITS) contributes to the FAD binding site.

Composed of a heavy chain and a light chain. It depends on FAD as a cofactor.

The protein resides in the membrane. Critical component of the membrane-bound oxidase that generates superoxide. It is the terminal component of a respiratory chain that transfers single electrons from cytoplasmic NADPH across the plasma membrane to molecular oxygen on the exterior. The protein is Superoxide-generating NADPH oxidase heavy chain subunit A (noxA) of Dictyostelium discoideum (Social amoeba).